The chain runs to 466 residues: Methylenetetrahydrofolate--tRNA-(uracil-5-)-methyltransferase TrmFO (466 aa).

Gly14–Gly19 contributes to the FAD binding site.

This sequence belongs to the MnmG family. TrmFO subfamily. The cofactor is FAD.

The protein resides in the cytoplasm. The catalysed reaction is uridine(54) in tRNA + (6R)-5,10-methylene-5,6,7,8-tetrahydrofolate + NADH + H(+) = 5-methyluridine(54) in tRNA + (6S)-5,6,7,8-tetrahydrofolate + NAD(+). It carries out the reaction uridine(54) in tRNA + (6R)-5,10-methylene-5,6,7,8-tetrahydrofolate + NADPH + H(+) = 5-methyluridine(54) in tRNA + (6S)-5,6,7,8-tetrahydrofolate + NADP(+). In terms of biological role, catalyzes the folate-dependent formation of 5-methyl-uridine at position 54 (M-5-U54) in all tRNAs. The chain is Methylenetetrahydrofolate--tRNA-(uracil-5-)-methyltransferase TrmFO from Brucella melitensis biotype 1 (strain ATCC 23456 / CCUG 17765 / NCTC 10094 / 16M).